Consider the following 118-residue polypeptide: uncharacterized protein (118 aa).

Cysteine 11 and cysteine 14 are oxidised to a cystine.

This sequence belongs to the ArsC family.

This is an uncharacterized protein from Bacillus subtilis (strain 168).